The sequence spans 876 residues: Leucine--tRNA ligase (876 aa).

Residues 43-53 carry the 'HIGH' region motif; sequence PYPSGRIHMGH. Positions 632 to 636 match the 'KMSKS' region motif; that stretch reads KMSKS. Lys635 is an ATP binding site.

Belongs to the class-I aminoacyl-tRNA synthetase family.

It is found in the cytoplasm. The enzyme catalyses tRNA(Leu) + L-leucine + ATP = L-leucyl-tRNA(Leu) + AMP + diphosphate. The protein is Leucine--tRNA ligase of Rhizobium etli (strain CIAT 652).